We begin with the raw amino-acid sequence, 545 residues long: MLPRLGFARTARSIHRFKMTQISKPFFHSTEVGKPGPQQKLSKSYTAVFKKWFVRGLKLTFYTTLAGTLYVSYELYKESNPPKQVPQSTAFANGLKKKELVILGTGWGAISLLKKLDTSLYNVTVVSPRSFFLFTPLLPSTPVGTIEMKSIVEPVRSIARRTPGEVHYIEAEALDVDPKAKKVMVQSVSEDEYFVSSLSYDYLVVSVGAKTTTFNIPGVYGNANFLKEIEDAQNIRMKLMKTIEQASSFPVNDPERKRLLTFVVVGGGPTGVEFAAELQDYINQDLRKWMPDLSKEMKVILIEALPNILNMFDKTLIKYAEDLFARDEIDLQVNTAVKVVEPTYIRTLQNGQTNTDIEYGMLVWATGNEPIDFSKTLMSRIPEQTNRRGLLINDKLELLGSENSIYAIGDCTAHTGFFPTAQVAHQEGEYLAKILDKKLQIEQLEWDMLNSTDETEVSRLQKEVNLRKSKLDKFNYKHMGALAYIGSETAIADLHMGDSSYQLKGMFAFLFWKSAYLAMCLSIRNRILIAMDWTKVYFLGRDSSV.

The N-terminal 21 residues, methionine 1–glutamine 21, are a transit peptide targeting the mitochondrion. Glutamate 99 to arginine 129 is a binding site for FAD. Leucine 260–glutamate 296 is a binding site for NAD(+).

The protein belongs to the NADH dehydrogenase family.

It localises to the mitochondrion intermembrane space. It catalyses the reaction a quinone + NADH + H(+) = a quinol + NAD(+). It carries out the reaction a ubiquinone + NADH + H(+) = a ubiquinol + NAD(+). Its function is as follows. External NADH dehydrogenase required for optimum cellular growth with a number of nonfermentable carbon sources, including ethanol. With NDE1, performes the mitochondrial oxidation of cytosolic NADH under these growth conditions. Regulates the mitochondrial glycerol-3-phosphate dehydrogenase, GUT2, also involved in cytosolic NADH oxidation. The polypeptide is External NADH-ubiquinone oxidoreductase 2, mitochondrial (NDE2) (Saccharomyces cerevisiae (strain ATCC 204508 / S288c) (Baker's yeast)).